A 408-amino-acid chain; its full sequence is Arginine biosynthesis bifunctional protein ArgJ (408 aa).

Residues Thr-156, Lys-182, Thr-193, Glu-279, Asn-403, and Thr-408 each coordinate substrate. The active-site Nucleophile is Thr-193.

The protein belongs to the ArgJ family. As to quaternary structure, heterotetramer of two alpha and two beta chains.

It is found in the cytoplasm. It carries out the reaction N(2)-acetyl-L-ornithine + L-glutamate = N-acetyl-L-glutamate + L-ornithine. The enzyme catalyses L-glutamate + acetyl-CoA = N-acetyl-L-glutamate + CoA + H(+). Its pathway is amino-acid biosynthesis; L-arginine biosynthesis; L-ornithine and N-acetyl-L-glutamate from L-glutamate and N(2)-acetyl-L-ornithine (cyclic): step 1/1. It functions in the pathway amino-acid biosynthesis; L-arginine biosynthesis; N(2)-acetyl-L-ornithine from L-glutamate: step 1/4. Functionally, catalyzes two activities which are involved in the cyclic version of arginine biosynthesis: the synthesis of N-acetylglutamate from glutamate and acetyl-CoA as the acetyl donor, and of ornithine by transacetylation between N(2)-acetylornithine and glutamate. The sequence is that of Arginine biosynthesis bifunctional protein ArgJ from Methylococcus capsulatus (strain ATCC 33009 / NCIMB 11132 / Bath).